A 276-amino-acid polypeptide reads, in one-letter code: Non-heme chloroperoxidase (276 aa).

In terms of domain architecture, AB hydrolase-1 spans 24 to 254; that stretch reads PVVFHHGWPL…NATLKSYEGL (231 aa). Residues Ser97, Asp227, and His256 contribute to the active site.

It belongs to the AB hydrolase superfamily. Bacterial non-heme haloperoxidase / perhydrolase family. Homodimer.

The chain is Non-heme chloroperoxidase (cpo) from Streptomyces lividans.